The following is a 131-amino-acid chain: Small ribosomal subunit protein uS8 (131 aa).

It belongs to the universal ribosomal protein uS8 family. Part of the 30S ribosomal subunit. Contacts proteins S5 and S12.

In terms of biological role, one of the primary rRNA binding proteins, it binds directly to 16S rRNA central domain where it helps coordinate assembly of the platform of the 30S subunit. In Campylobacter jejuni (strain RM1221), this protein is Small ribosomal subunit protein uS8.